The following is a 288-amino-acid chain: Xyloglucan endotransglucosylase protein 8 (288 aa).

A signal peptide spans 1–25 (MAASPYSIFAVQLLLLASWMLSSSS). The 190-residue stretch at 26–215 (SNFNQDFNIA…WTQAPFTTSY (190 aa)) folds into the GH16 domain. Glu-102 serves as the catalytic Nucleophile. Glu-106 (proton donor) is an active-site residue. Glu-106 provides a ligand contact to xyloglucan. Asn-110 carries an N-linked (GlcNAc...) asparagine glycan. Xyloglucan-binding positions include 119–121 (HTN), 129–131 (ERE), 194–195 (EW), and Gly-199. 2 disulfides stabilise this stretch: Cys-224–Cys-233 and Cys-268–Cys-282. Arg-273 serves as a coordination point for xyloglucan.

Belongs to the glycosyl hydrolase 16 family. XTH group 2 subfamily. Contains at least one intrachain disulfide bond essential for its enzymatic activity. As to expression, highly expressed in mature fruits. Very low expression in leaves, flowers, calyces and stems.

The protein resides in the secreted. Its subcellular location is the cell wall. It is found in the extracellular space. It localises to the apoplast. It catalyses the reaction breaks a beta-(1-&gt;4) bond in the backbone of a xyloglucan and transfers the xyloglucanyl segment on to O-4 of the non-reducing terminal glucose residue of an acceptor, which can be a xyloglucan or an oligosaccharide of xyloglucan.. Functionally, catalyzes xyloglucan endotransglycosylation (XET). Cleaves and religates xyloglucan polymers. Does not catalyze xyloglucan endohydrolysis (XEH). Overexpression in Arabidopsis transgenic plants causes accelerated dark-induced leaf senescence and higher lipid peroxidation of the leaf cells. Overexpression in transgenic tomato plants promotes fruit ripening and softening. Probably involved in cell wall restructuring during postharvest fruit softening. The polypeptide is Xyloglucan endotransglucosylase protein 8 (Diospyros kaki (Kaki persimmon)).